Consider the following 411-residue polypeptide: Serine hydroxymethyltransferase (411 aa).

(6S)-5,6,7,8-tetrahydrofolate contacts are provided by residues L119 and 123 to 125 (GHL). N6-(pyridoxal phosphate)lysine is present on K228. 351-353 (SPF) lines the (6S)-5,6,7,8-tetrahydrofolate pocket.

Belongs to the SHMT family. As to quaternary structure, homodimer. The cofactor is pyridoxal 5'-phosphate.

The protein localises to the cytoplasm. The catalysed reaction is (6R)-5,10-methylene-5,6,7,8-tetrahydrofolate + glycine + H2O = (6S)-5,6,7,8-tetrahydrofolate + L-serine. The protein operates within one-carbon metabolism; tetrahydrofolate interconversion. It functions in the pathway amino-acid biosynthesis; glycine biosynthesis; glycine from L-serine: step 1/1. Its function is as follows. Catalyzes the reversible interconversion of serine and glycine with tetrahydrofolate (THF) serving as the one-carbon carrier. This reaction serves as the major source of one-carbon groups required for the biosynthesis of purines, thymidylate, methionine, and other important biomolecules. Also exhibits THF-independent aldolase activity toward beta-hydroxyamino acids, producing glycine and aldehydes, via a retro-aldol mechanism. This Clostridium botulinum (strain Eklund 17B / Type B) protein is Serine hydroxymethyltransferase.